We begin with the raw amino-acid sequence, 607 residues long: MRKRIYHSFKTQQHPLLLRRPLPPKLPKLPLVKKKVRIVQTGSAREPQEARRKFDTEESALVKIDQSVSQPQKPASVQNVCLDYEHDEPERVVNIFPHPHGVRRLHWKVPKSAAGSMFIPRCLSASSRVFRKTLSQIKRARKSLKSKQDEDLTKKPFSNTLVISEELSKPLPPSYSRLIASRFKHSGTKFRPAPKISHYIQELPLLKDVKETVLSPISSASSAIPEPEWSERPLPKTTIGKVIQLNTGSLPPAHSLPTPALPRKPPRQIMIENAVMTRKTETQKPVEITLRPTRRLDPDAHVLRGDGFKAVGATRSETILALTTLAIINCQIYGRNALNFKGFFLAQCPDLTSVAFQLVYLNLSYNDLHQFPGEVLYLQNLQVLKLRNNPIREIPSEIQQLKYLRKFTIAFNFITSLPAGLFCLNYLEELDVSYNEIENIPNEIQKLRSLEKLTVDGTNITAFPPGILKLNLVKLEFENTFTIPPFWLENSCNNPPRLTHICSLFIVKNNLHKILDYDPVVVQKYLISTSDCDWCHGPKFGEGFGIIRSCNIFGLSHVPIKFHVCSLSCYLEIRESSFVLEGFPSRRIALNMDWVKERKVSNVSFYL.

7 LRR repeats span residues 357–378 (QLVYLNLSYNDLHQFPGEVLYL), 380–401 (NLQVLKLRNNPIREIPSEIQQL), 403–424 (YLRKFTIAFNFITSLPAGLFCL), 426–447 (YLEELDVSYNEIENIPNEIQKL), 449–470 (SLEKLTVDGTNITAFPPGILKL), 471–497 (NLVKLEFENTFTIPPFWLENSCNNPPR), and 498–524 (LTHICSLFIVKNNLHKILDYDPVVVQK).

The polypeptide is Leucine-rich repeat-containing protein 63 (Lrrc63) (Rattus norvegicus (Rat)).